A 468-amino-acid polypeptide reads, in one-letter code: Na(+)/H(+) antiporter NhaA (468 aa).

12 consecutive transmembrane segments (helical) span residues 28–48 (FLHV…IALV), 79–99 (LHFW…GMEI), 115–135 (ALPL…YLAF), 143–163 (AGWA…LALL), 173–193 (IFLL…IAFF), 196–216 (GGLD…VLGL), 219–239 (IGIG…TGLL), 240–260 (MTGA…PVVP), 317–337 (ALHP…NAGV), 356–376 (VAGA…WLLV), 392–412 (IVLI…IAML), and 426–446 (LGVL…GAIY).

It belongs to the NhaA Na(+)/H(+) (TC 2.A.33) antiporter family.

It localises to the cell inner membrane. It catalyses the reaction Na(+)(in) + 2 H(+)(out) = Na(+)(out) + 2 H(+)(in). Na(+)/H(+) antiporter that extrudes sodium in exchange for external protons. The protein is Na(+)/H(+) antiporter NhaA of Bordetella petrii (strain ATCC BAA-461 / DSM 12804 / CCUG 43448).